The sequence spans 193 residues: MNDRLTPELVLSAYCQGCFPMADPETGEISFYEPDPRALIPLDDRFHIPHGLKRALNKKPFELRMDTAFPEVVHACARTDQPEEQWIDGQIEEAYGKLHEMGFAHSVECWDEEGLQGGLYGVALGKAFFGESMFHRKTDASKIALVALVQYLRAHRFLFLDTQWTTPHLLKFGTYEVPAKEYRKLLKRALEEQ.

This sequence belongs to the L/F-transferase family.

It is found in the cytoplasm. The catalysed reaction is N-terminal L-lysyl-[protein] + L-leucyl-tRNA(Leu) = N-terminal L-leucyl-L-lysyl-[protein] + tRNA(Leu) + H(+). The enzyme catalyses N-terminal L-arginyl-[protein] + L-leucyl-tRNA(Leu) = N-terminal L-leucyl-L-arginyl-[protein] + tRNA(Leu) + H(+). It carries out the reaction L-phenylalanyl-tRNA(Phe) + an N-terminal L-alpha-aminoacyl-[protein] = an N-terminal L-phenylalanyl-L-alpha-aminoacyl-[protein] + tRNA(Phe). Functions in the N-end rule pathway of protein degradation where it conjugates Leu, Phe and, less efficiently, Met from aminoacyl-tRNAs to the N-termini of proteins containing an N-terminal arginine or lysine. This is Leucyl/phenylalanyl-tRNA--protein transferase from Akkermansia muciniphila (strain ATCC BAA-835 / DSM 22959 / JCM 33894 / BCRC 81048 / CCUG 64013 / CIP 107961 / Muc).